We begin with the raw amino-acid sequence, 385 residues long: 3,5,7-trioxododecanoyl-CoA synthase (385 aa).

Cysteine 157 is a catalytic residue.

It belongs to the thiolase-like superfamily. Chalcone/stilbene synthases family. Expressed in bracts, flowers and young leaves. Not detected in mature leaves, roots and stems. Expressed in glandular trichomes.

The enzyme catalyses hexanoyl-CoA + 3 malonyl-CoA + 3 H(+) = 3,5,7-trioxododecanoyl-CoA + 3 CO2 + 3 CoA. The catalysed reaction is 3,5,7-trioxododecanoyl-CoA = olivetol + CO2 + CoA. Its pathway is secondary metabolite biosynthesis; terpenoid biosynthesis. In terms of biological role, involved in the biosynthesis of cannabinoids-related terpenophenolic natural products, which have pharmacological activity. Polyketide synthase responsible for olivetol biosynthesis, from a C(12)-polyketide, probably 3,5,7-trioxododecanoyl-CoA. Catalyzes the first step in the cannabinoids biosynthetic pathway. The preferred substrate is hexanoyl-CoA, but also accepts CoA esters with C4 to C8 aliphatic side chains. When using malonyl-CoA and hexanoyl-CoA as substrates, produces undetermined compounds distinct form olivetol or olivetolic acid that could be hexanoyl triacetic acid lactone (HTAL) and pentyl diacetic acid lactone (PDAL). Produces olivetolic acid when acting in concert with olivetolic acid cyclase (OAC). This chain is 3,5,7-trioxododecanoyl-CoA synthase, found in Cannabis sativa (Hemp).